A 363-amino-acid polypeptide reads, in one-letter code: LIM and cysteine-rich domains protein 1 (363 aa).

The residue at position 16 (Ser16) is a Phosphoserine. The 108-residue stretch at 99-206 folds into the PET domain; it reads MIMTNPIATG…GEVALPGQGG (108 aa). The tract at residues 200–234 is disordered; that stretch reads ALPGQGGLPKEEGKQQEKPEGAETAPPTTNGSIGD. Residues 208-220 show a composition bias toward basic and acidic residues; it reads PKEEGKQQEKPEG. LIM zinc-binding domains lie at 239–304 and 305–363; these read YVCE…SLRP and RCSG…SKRS.

In terms of assembly, interacts with beta-dystroglycan. Interacts with GATA1, GATA4 and GATA6.

Its subcellular location is the cytoplasm. The protein localises to the nucleus. Transcriptional cofactor that restricts GATA6 function by inhibiting DNA-binding, resulting in repression of GATA6 transcriptional activation of downstream target genes. Represses GATA6-mediated trans activation of lung- and cardiac tissue-specific promoters. Inhibits DNA-binding by GATA4 and GATA1 to the cTNC promoter. Plays a critical role in the development of cardiac hypertrophy via activation of calcineurin/nuclear factor of activated T-cells signaling pathway. The protein is LIM and cysteine-rich domains protein 1 (LMCD1) of Bos taurus (Bovine).